Reading from the N-terminus, the 120-residue chain is Large ribosomal subunit protein uL18 (120 aa).

This sequence belongs to the universal ribosomal protein uL18 family. Part of the 50S ribosomal subunit; part of the 5S rRNA/L5/L18/L25 subcomplex. Contacts the 5S and 23S rRNAs.

In terms of biological role, this is one of the proteins that bind and probably mediate the attachment of the 5S RNA into the large ribosomal subunit, where it forms part of the central protuberance. This is Large ribosomal subunit protein uL18 from Rhizobium rhizogenes (strain K84 / ATCC BAA-868) (Agrobacterium radiobacter).